Reading from the N-terminus, the 248-residue chain is Uridylate kinase (248 aa).

15–18 (KLSG) is an ATP binding site. The segment at 23–28 (GAEGFG) is involved in allosteric activation by GTP. Glycine 57 is a binding site for UMP. ATP contacts are provided by glycine 58 and arginine 62. UMP is bound by residues aspartate 77 and 138–145 (TGNPFFTT). ATP contacts are provided by threonine 165, tyrosine 171, and aspartate 174.

Belongs to the UMP kinase family. As to quaternary structure, homohexamer.

The protein resides in the cytoplasm. It carries out the reaction UMP + ATP = UDP + ADP. The protein operates within pyrimidine metabolism; CTP biosynthesis via de novo pathway; UDP from UMP (UMPK route): step 1/1. Allosterically activated by GTP. Inhibited by UTP. In terms of biological role, catalyzes the reversible phosphorylation of UMP to UDP. The protein is Uridylate kinase of Yersinia enterocolitica serotype O:8 / biotype 1B (strain NCTC 13174 / 8081).